Consider the following 114-residue polypeptide: Iron-sulfur cluster insertion protein ErpA (114 aa).

The iron-sulfur cluster site is built by Cys42, Cys106, and Cys108.

Belongs to the HesB/IscA family. As to quaternary structure, homodimer. The cofactor is iron-sulfur cluster.

Required for insertion of 4Fe-4S clusters for at least IspG. This Pseudoalteromonas atlantica (strain T6c / ATCC BAA-1087) protein is Iron-sulfur cluster insertion protein ErpA.